A 364-amino-acid chain; its full sequence is tRNA 2-selenouridine synthase (364 aa).

In terms of domain architecture, Rhodanese spans 14–137 (LIADTPIIDV…LRQTAIQATI (124 aa)). Cysteine 97 (S-selanylcysteine intermediate) is an active-site residue.

Belongs to the SelU family. In terms of assembly, monomer.

The enzyme catalyses 5-methylaminomethyl-2-thiouridine(34) in tRNA + selenophosphate + (2E)-geranyl diphosphate + H2O + H(+) = 5-methylaminomethyl-2-selenouridine(34) in tRNA + (2E)-thiogeraniol + phosphate + diphosphate. It carries out the reaction 5-methylaminomethyl-2-thiouridine(34) in tRNA + (2E)-geranyl diphosphate = 5-methylaminomethyl-S-(2E)-geranyl-thiouridine(34) in tRNA + diphosphate. The catalysed reaction is 5-methylaminomethyl-S-(2E)-geranyl-thiouridine(34) in tRNA + selenophosphate + H(+) = 5-methylaminomethyl-2-(Se-phospho)selenouridine(34) in tRNA + (2E)-thiogeraniol. It catalyses the reaction 5-methylaminomethyl-2-(Se-phospho)selenouridine(34) in tRNA + H2O = 5-methylaminomethyl-2-selenouridine(34) in tRNA + phosphate. Its function is as follows. Involved in the post-transcriptional modification of the uridine at the wobble position (U34) of tRNA(Lys), tRNA(Glu) and tRNA(Gln). Catalyzes the conversion of 2-thiouridine (S2U-RNA) to 2-selenouridine (Se2U-RNA). Acts in a two-step process involving geranylation of 2-thiouridine (S2U) to S-geranyl-2-thiouridine (geS2U) and subsequent selenation of the latter derivative to 2-selenouridine (Se2U) in the tRNA chain. This Shigella boydii serotype 18 (strain CDC 3083-94 / BS512) protein is tRNA 2-selenouridine synthase.